Here is a 91-residue protein sequence, read N- to C-terminus: Small ribosomal subunit protein bS18 (91 aa).

The tract at residues 1–27 (MTQQSNTERKPRAKGPKRPRKPKVDPF) is disordered. Basic residues predominate over residues 11–21 (PRAKGPKRPRK).

The protein belongs to the bacterial ribosomal protein bS18 family. As to quaternary structure, part of the 30S ribosomal subunit. Forms a tight heterodimer with protein bS6.

In terms of biological role, binds as a heterodimer with protein bS6 to the central domain of the 16S rRNA, where it helps stabilize the platform of the 30S subunit. This chain is Small ribosomal subunit protein bS18, found in Deinococcus geothermalis (strain DSM 11300 / CIP 105573 / AG-3a).